We begin with the raw amino-acid sequence, 597 residues long: Bile salt-activated lipase (597 aa).

The N-terminal stretch at 1 to 18 (LGASRLGPSPGCLAVASA) is a signal peptide. A disulfide bridge links Cys82 with Cys98. N-linked (GlcNAc...) asparagine glycosylation is present at Asn205. Ser212 functions as the Acyl-ester intermediate in the catalytic mechanism. A disulfide bridge connects residues Cys264 and Cys275. Asp338 functions as the Charge relay system in the catalytic mechanism. N-linked (GlcNAc...) asparagine glycosylation is present at Asn379. The active-site Charge relay system is His453. The segment at 553–591 (AGASLLPPEDNSQASPVPPADNSGAPTEPSAGDSEVAQM) is disordered.

This sequence belongs to the type-B carboxylesterase/lipase family. As to quaternary structure, interacts with CLC.

The protein localises to the secreted. It catalyses the reaction a triacylglycerol + H2O = a diacylglycerol + a fatty acid + H(+). The catalysed reaction is 1,2,3-tri-(9Z-octadecenoyl)-glycerol + H2O = di-(9Z)-octadecenoylglycerol + (9Z)-octadecenoate + H(+). The enzyme catalyses 1,2,3-trioctanoylglycerol + H2O = dioctanoylglycerol + octanoate + H(+). It carries out the reaction a sterol ester + H2O = a sterol + a fatty acid + H(+). It catalyses the reaction cholesteryl (9Z-octadecenoate) + H2O = cholesterol + (9Z)-octadecenoate + H(+). The catalysed reaction is an acetyl ester + H2O = an aliphatic alcohol + acetate + H(+). The enzyme catalyses a butanoate ester + H2O = an aliphatic alcohol + butanoate + H(+). It carries out the reaction 9-hexadecanoyloxy-octadecanoate + H2O = 9-hydroxy-octadecanoate + hexadecanoate + H(+). It catalyses the reaction 9-(9Z-octadecenoyloxy)-octadecanoate + H2O = 9-hydroxy-octadecanoate + (9Z)-octadecenoate + H(+). The catalysed reaction is 1-hexadecanoyl-sn-glycero-3-phosphocholine + H2O = sn-glycerol 3-phosphocholine + hexadecanoate + H(+). The enzyme catalyses 12-hexadecanoyloxy-octadecanoate + H2O = 12-hydroxyoctadecanoate + hexadecanoate + H(+). It carries out the reaction 12-(9Z-octadecenoyloxy)-octadecanoate + H2O = 12-hydroxyoctadecanoate + (9Z)-octadecenoate + H(+). It catalyses the reaction 13-(9Z-octadecenoyloxy)-octadecanoate + H2O = 13-hydroxy-octadecanoate + (9Z)-octadecenoate + H(+). The catalysed reaction is 9-(9Z-hexadecenoyloxy)-octadecanoate + H2O = (9Z)-hexadecenoate + 9-hydroxy-octadecanoate + H(+). The enzyme catalyses 12-(9Z-hexadecenoyloxy)-octadecanoate + H2O = 12-hydroxyoctadecanoate + (9Z)-hexadecenoate + H(+). It carries out the reaction 13-(9Z-hexadecenoyloxy)-octadecanoate + H2O = 13-hydroxy-octadecanoate + (9Z)-hexadecenoate + H(+). It catalyses the reaction 12-octadecanoyloxy-octadecanoate + H2O = 12-hydroxyoctadecanoate + octadecanoate + H(+). The catalysed reaction is 13-octadecanoyloxy-octadecanoate + H2O = 13-hydroxy-octadecanoate + octadecanoate + H(+). The enzyme catalyses 5-(9Z-hexadecenoyloxy)-octadecanoate + H2O = 5-hydroxy-octadecanoate + (9Z)-hexadecenoate + H(+). It carries out the reaction 9-octadecanoyloxy-octadecanoate + H2O = 9-hydroxy-octadecanoate + octadecanoate + H(+). With respect to regulation, activated by bile salts such as sodium taurocholate. Catalyzes the hydrolysis of a wide range of substrates including cholesteryl esters, phospholipids, lysophospholipids, di- and tri-acylglycerols, and fatty acid esters of hydroxy fatty acids (FAHFA). Preferentially hydrolyzes FAHFAs with the ester bond further away from the carboxylate. Unsaturated FAHFAs are hydrolyzed more quickly than saturated FAHFAs. Has an essential role in the complete digestion of dietary lipids and their intestinal absorption, along with the absorption of fat-soluble vitamins. This is Bile salt-activated lipase (CEL) from Bos taurus (Bovine).